Reading from the N-terminus, the 612-residue chain is Dihydroxy-acid dehydratase (612 aa).

Mg(2+) is bound at residue Asp-81. Cys-122 contacts [2Fe-2S] cluster. Mg(2+) is bound by residues Asp-123 and Lys-124. At Lys-124 the chain carries N6-carboxylysine. Cys-195 serves as a coordination point for [2Fe-2S] cluster. Glu-491 provides a ligand contact to Mg(2+). Ser-517 functions as the Proton acceptor in the catalytic mechanism.

Belongs to the IlvD/Edd family. In terms of assembly, homodimer. It depends on [2Fe-2S] cluster as a cofactor. Requires Mg(2+) as cofactor.

It catalyses the reaction (2R)-2,3-dihydroxy-3-methylbutanoate = 3-methyl-2-oxobutanoate + H2O. It carries out the reaction (2R,3R)-2,3-dihydroxy-3-methylpentanoate = (S)-3-methyl-2-oxopentanoate + H2O. It participates in amino-acid biosynthesis; L-isoleucine biosynthesis; L-isoleucine from 2-oxobutanoate: step 3/4. Its pathway is amino-acid biosynthesis; L-valine biosynthesis; L-valine from pyruvate: step 3/4. Functionally, functions in the biosynthesis of branched-chain amino acids. Catalyzes the dehydration of (2R,3R)-2,3-dihydroxy-3-methylpentanoate (2,3-dihydroxy-3-methylvalerate) into 2-oxo-3-methylpentanoate (2-oxo-3-methylvalerate) and of (2R)-2,3-dihydroxy-3-methylbutanoate (2,3-dihydroxyisovalerate) into 2-oxo-3-methylbutanoate (2-oxoisovalerate), the penultimate precursor to L-isoleucine and L-valine, respectively. In Rhizobium meliloti (strain 1021) (Ensifer meliloti), this protein is Dihydroxy-acid dehydratase.